A 201-amino-acid chain; its full sequence is uncharacterized protein (201 aa).

2 disordered regions span residues 46 to 80 (PLVNPKYDNPQIESAELDGSQNDNYSTDTSQSYDE) and 143 to 201 (SSTS…ANPA). 2 stretches are compositionally biased toward polar residues: residues 64–78 (GSQNDNYSTDTSQSY) and 143–167 (SSTSAKTIQNDKPATDVSLGSNSPA).

This is an uncharacterized protein from Legionella pneumophila.